Here is a 382-residue protein sequence, read N- to C-terminus: uncharacterized protein (382 aa).

12 consecutive transmembrane segments (helical) span residues 14 to 34, 45 to 65, 79 to 99, 102 to 122, 131 to 151, 157 to 177, 204 to 224, 235 to 255, 270 to 290, 291 to 311, 325 to 345, and 348 to 368; these read GLLL…LWLA, VVSS…GYVI, FIFA…SWLA, FVAG…LMCS, LLAA…LLVS, LMSV…PLLF, LGVN…GLMP, ASIG…QWPI, VQVF…AMAP, ALFI…AWAC, ALLL…AMLM, and FSDN…LLML.

Belongs to the major facilitator superfamily. YcaD (TC 2.A.1.26) family.

It is found in the cell inner membrane. This is an uncharacterized protein from Shigella sonnei (strain Ss046).